A 129-amino-acid polypeptide reads, in one-letter code: Small ribosomal subunit protein uS9 (129 aa).

Residues R108–R129 form a disordered region. A compositionally biased stretch (basic residues) spans K114–R129.

This sequence belongs to the universal ribosomal protein uS9 family.

The polypeptide is Small ribosomal subunit protein uS9 (Chlorobaculum tepidum (strain ATCC 49652 / DSM 12025 / NBRC 103806 / TLS) (Chlorobium tepidum)).